The primary structure comprises 364 residues: tRNA N6-adenosine threonylcarbamoyltransferase (364 aa).

Fe cation contacts are provided by His115 and His119. Substrate is bound by residues 137-141 (LVSGG), Asp170, Gly183, and Asn288. Asp316 serves as a coordination point for Fe cation.

This sequence belongs to the KAE1 / TsaD family. Fe(2+) serves as cofactor.

The protein resides in the cytoplasm. It carries out the reaction L-threonylcarbamoyladenylate + adenosine(37) in tRNA = N(6)-L-threonylcarbamoyladenosine(37) in tRNA + AMP + H(+). Its function is as follows. Required for the formation of a threonylcarbamoyl group on adenosine at position 37 (t(6)A37) in tRNAs that read codons beginning with adenine. Is involved in the transfer of the threonylcarbamoyl moiety of threonylcarbamoyl-AMP (TC-AMP) to the N6 group of A37, together with TsaE and TsaB. TsaD likely plays a direct catalytic role in this reaction. In Bartonella tribocorum (strain CIP 105476 / IBS 506), this protein is tRNA N6-adenosine threonylcarbamoyltransferase.